A 370-amino-acid polypeptide reads, in one-letter code: Queuine tRNA-ribosyltransferase (370 aa).

Asp-93 functions as the Proton acceptor in the catalytic mechanism. Residues 93-97 (DSGGF), Asp-147, Gln-189, and Gly-216 contribute to the substrate site. Residues 247-253 (GVGSPDC) form an RNA binding region. Residue Asp-266 is the Nucleophile of the active site. An RNA binding; important for wobble base 34 recognition region spans residues 271–275 (TRIAR). Zn(2+) contacts are provided by Cys-304, Cys-306, Cys-309, and His-335.

This sequence belongs to the queuine tRNA-ribosyltransferase family. In terms of assembly, homodimer. Within each dimer, one monomer is responsible for RNA recognition and catalysis, while the other monomer binds to the replacement base PreQ1. It depends on Zn(2+) as a cofactor.

The enzyme catalyses 7-aminomethyl-7-carbaguanine + guanosine(34) in tRNA = 7-aminomethyl-7-carbaguanosine(34) in tRNA + guanine. It participates in tRNA modification; tRNA-queuosine biosynthesis. Its function is as follows. Catalyzes the base-exchange of a guanine (G) residue with the queuine precursor 7-aminomethyl-7-deazaguanine (PreQ1) at position 34 (anticodon wobble position) in tRNAs with GU(N) anticodons (tRNA-Asp, -Asn, -His and -Tyr). Catalysis occurs through a double-displacement mechanism. The nucleophile active site attacks the C1' of nucleotide 34 to detach the guanine base from the RNA, forming a covalent enzyme-RNA intermediate. The proton acceptor active site deprotonates the incoming PreQ1, allowing a nucleophilic attack on the C1' of the ribose to form the product. After dissociation, two additional enzymatic reactions on the tRNA convert PreQ1 to queuine (Q), resulting in the hypermodified nucleoside queuosine (7-(((4,5-cis-dihydroxy-2-cyclopenten-1-yl)amino)methyl)-7-deazaguanosine). The protein is Queuine tRNA-ribosyltransferase of Desulforamulus reducens (strain ATCC BAA-1160 / DSM 100696 / MI-1) (Desulfotomaculum reducens).